The primary structure comprises 214 residues: LOB domain-containing protein 7 (214 aa).

The LOB domain maps to 12–113 (TACAACKHQR…TELNLTRQQI (102 aa)).

The protein belongs to the LOB domain-containing protein family.

This chain is LOB domain-containing protein 7 (LBD7), found in Arabidopsis thaliana (Mouse-ear cress).